An 86-amino-acid chain; its full sequence is Exodeoxyribonuclease 7 small subunit (86 aa).

The disordered stretch occupies residues 1-26 (MQDELFETEKIPPKNTKNTKNAPKKS).

It belongs to the XseB family. In terms of assembly, heterooligomer composed of large and small subunits.

It localises to the cytoplasm. It carries out the reaction Exonucleolytic cleavage in either 5'- to 3'- or 3'- to 5'-direction to yield nucleoside 5'-phosphates.. Functionally, bidirectionally degrades single-stranded DNA into large acid-insoluble oligonucleotides, which are then degraded further into small acid-soluble oligonucleotides. In Helicobacter pylori (strain ATCC 700392 / 26695) (Campylobacter pylori), this protein is Exodeoxyribonuclease 7 small subunit.